A 451-amino-acid polypeptide reads, in one-letter code: Cobalamin reductase PduS (451 aa).

4Fe-4S ferredoxin-type domains lie at 255–284 and 300–330; these read TVLSVARTVCEQCRLCTDLCPRHLIGHELS and PQLLLSALTCSECNVCESVACPVGISPMRIN. [4Fe-4S] cluster contacts are provided by Cys-264, Cys-267, Cys-270, Cys-274, Cys-309, Cys-312, Cys-315, and Cys-320.

It belongs to the PduS cobalamin reductase family. Monomeric when purified anaerobically, dimeric under aerobic conditions. Forms a complex with PduO. Interacts with PduT, probably via the N-terminus of PduS. It depends on [4Fe-4S] cluster as a cofactor. Requires FMN as cofactor.

It localises to the bacterial microcompartment. Its pathway is polyol metabolism; 1,2-propanediol degradation. In terms of biological role, a protein that aids in conversion of cob(III)alamin to cob(II)alamin and then to cob(I)alamin in the bacterial microcompartment (BMC) dedicated to 1,2-propanediol (1,2-PD) degradation. The latter step requires PduO. No free cob(I)alamin is released, suggesting a complex is formed with PduO that finishes conversion to adenosylcobalamin. PduS and PduO allow regeneration of the adenosylcobalamin cofactor within the BMC. Another study showed reduction of cob(II)alamin to cob(I)alamin in the absence of PduO. Both reactions require NADH. Cyanocobalamin (CN-Cbl) is not a substrate for the first reaction. Cobalamin reduction probably occurs spontaneously in the presence of free reduced flavin nucleotides, this protein may be involved in electron transfer for this reduction. The 1,2-PD-specific bacterial microcompartment (BMC) concentrates low levels of 1,2-PD catabolic enzymes, concentrates volatile reaction intermediates thus enhancing pathway flux and keeps the level of toxic, mutagenic propionaldehyde low. The protein is Cobalamin reductase PduS of Salmonella typhimurium (strain LT2 / SGSC1412 / ATCC 700720).